The primary structure comprises 197 residues: Short chain dehydrogenase ausX (197 aa).

4 residues coordinate NADP(+): Ile-49, Asp-95, Arg-157, and Tyr-189. Tyr-189 acts as the Proton acceptor in catalysis. Tyr-189 acts as the Proton donor in catalysis.

Belongs to the short-chain dehydrogenases/reductases (SDR) family.

It functions in the pathway secondary metabolite biosynthesis; terpenoid biosynthesis. Its function is as follows. Short chain dehydrogenase; part of the gene cluster A that mediates the biosynthesis of austinol and dehydroaustinol, two fungal meroterpenoids. The first step of the pathway is the synthesis of 3,5-dimethylorsellinic acid by the polyketide synthase ausA. 3,5-dimethylorsellinic acid is then prenylated by the polyprenyl transferase ausN. Further epoxidation by the FAD-dependent monooxygenase ausM and cyclization by the probable terpene cyclase ausL lead to the formation of protoaustinoid A. Protoaustinoid A is then oxidized to spiro-lactone preaustinoid A3 by the combined action of the FAD-binding monooxygenases ausB and ausC, and the dioxygenase ausE. Acid-catalyzed keto-rearrangement and ring contraction of the tetraketide portion of preaustinoid A3 by ausJ lead to the formation of preaustinoid A4. The aldo-keto reductase ausK, with the help of ausH, is involved in the next step by transforming preaustinoid A4 into isoaustinone which is in turn hydroxylated by the P450 monooxygenase ausI to form austinolide. Finally, the cytochrome P450 monooxygenase ausG modifies austinolide to austinol. Austinol can be further modified to dehydroaustinol which forms a diffusible complex with diorcinol that initiates conidiation. Due to genetic rearrangements of the clusters and the subsequent loss of some enzymes, the end products of the Emericella nidulans austinoid biosynthesis clusters are austinol and dehydroaustinol, even if additional enzymes, such as the O-acetyltransferase ausQ and the cytochrome P450 monooxygenase ausR are still functional. This is Short chain dehydrogenase ausX from Emericella nidulans (strain FGSC A4 / ATCC 38163 / CBS 112.46 / NRRL 194 / M139) (Aspergillus nidulans).